Here is a 61-residue protein sequence, read N- to C-terminus: MLILTRKVGETVLIGDDISITVLNIRGNQVKIGIEAPKDVTVHREEIYERIKLAAEDNNHV.

Belongs to the CsrA/RsmA family. In terms of assembly, homodimer; the beta-strands of each monomer intercalate to form a hydrophobic core, while the alpha-helices form wings that extend away from the core.

Its subcellular location is the cytoplasm. Functionally, a key translational regulator that binds mRNA to regulate translation initiation and/or mRNA stability. Mediates global changes in gene expression, shifting from rapid growth to stress survival by linking envelope stress, the stringent response and the catabolite repression systems. Usually binds in the 5'-UTR; binding at or near the Shine-Dalgarno sequence prevents ribosome-binding, repressing translation, binding elsewhere in the 5'-UTR can activate translation and/or stabilize the mRNA. Its function is antagonized by small RNA(s). The sequence is that of Translational regulator CsrA from Actinobacillus succinogenes (strain ATCC 55618 / DSM 22257 / CCUG 43843 / 130Z).